The sequence spans 53 residues: UPF0391 membrane protein Meso_3392 (53 aa).

The next 2 membrane-spanning stretches (helical) occupy residues 4 to 24 (WILI…HSLA) and 33 to 53 (ILIA…IAIA).

Belongs to the UPF0391 family.

Its subcellular location is the cell membrane. This chain is UPF0391 membrane protein Meso_3392, found in Chelativorans sp. (strain BNC1).